We begin with the raw amino-acid sequence, 115 residues long: Cytochrome c oxidase subunit 3 (115 aa).

2 helical membrane-spanning segments follow: residues 32–52 (CLQGLLFTVLLGLYFSFLQGL) and 70–90 (FFLATGFHGLHVLIGTIFLMI).

The protein belongs to the cytochrome c oxidase subunit 3 family. Component of the cytochrome c oxidase (complex IV, CIV), a multisubunit enzyme composed of a catalytic core of 3 subunits and several supernumerary subunits. The complex exists as a monomer or a dimer and forms supercomplexes (SCs) in the inner mitochondrial membrane with ubiquinol-cytochrome c oxidoreductase (cytochrome b-c1 complex, complex III, CIII).

It localises to the mitochondrion inner membrane. It catalyses the reaction 4 Fe(II)-[cytochrome c] + O2 + 8 H(+)(in) = 4 Fe(III)-[cytochrome c] + 2 H2O + 4 H(+)(out). Component of the cytochrome c oxidase, the last enzyme in the mitochondrial electron transport chain which drives oxidative phosphorylation. The respiratory chain contains 3 multisubunit complexes succinate dehydrogenase (complex II, CII), ubiquinol-cytochrome c oxidoreductase (cytochrome b-c1 complex, complex III, CIII) and cytochrome c oxidase (complex IV, CIV), that cooperate to transfer electrons derived from NADH and succinate to molecular oxygen, creating an electrochemical gradient over the inner membrane that drives transmembrane transport and the ATP synthase. Cytochrome c oxidase is the component of the respiratory chain that catalyzes the reduction of oxygen to water. Electrons originating from reduced cytochrome c in the intermembrane space (IMS) are transferred via the dinuclear copper A center (CU(A)) of subunit 2 and heme A of subunit 1 to the active site in subunit 1, a binuclear center (BNC) formed by heme A3 and copper B (CU(B)). The BNC reduces molecular oxygen to 2 water molecules using 4 electrons from cytochrome c in the IMS and 4 protons from the mitochondrial matrix. The sequence is that of Cytochrome c oxidase subunit 3 (COIII) from Artemia salina (Brine shrimp).